An 89-amino-acid polypeptide reads, in one-letter code: Small ribosomal subunit protein uS15 (89 aa).

It belongs to the universal ribosomal protein uS15 family. Part of the 30S ribosomal subunit. Forms a bridge to the 50S subunit in the 70S ribosome, contacting the 23S rRNA.

One of the primary rRNA binding proteins, it binds directly to 16S rRNA where it helps nucleate assembly of the platform of the 30S subunit by binding and bridging several RNA helices of the 16S rRNA. Functionally, forms an intersubunit bridge (bridge B4) with the 23S rRNA of the 50S subunit in the ribosome. The chain is Small ribosomal subunit protein uS15 from Actinobacillus pleuropneumoniae serotype 5b (strain L20).